The sequence spans 792 residues: Zinc finger protein 606 (792 aa).

Residues 62 to 133 (VTFKDVAVDF…EQACPQRTCP (72 aa)) form the KRAB domain. A C2H2-type 1; degenerate zinc finger spans residues 289 to 311 (FKCTDAVKSFNHIIHFGDHKGIH). The C2H2-type 2; degenerate zinc-finger motif lies at 317–344 (YEYKECHQIFNQSPSFNEHPRLHVGENQ). The C2H2-type 3; degenerate zinc finger occupies 400–422 (YDYNECGTSFIWSSYLIQHKKTH). 13 consecutive C2H2-type zinc fingers follow at residues 428–450 (YECD…ERTH), 456–478 (YECN…KRIH), 484–506 (YVCN…QRTH), 512–534 (FECT…MRMH), 540–562 (FKCD…ERTH), 568–590 (YKCT…QRTH), 596–618 (YNCQ…EIIH), 624–646 (YECN…QRTH), 652–674 (YECN…RRIH), 680–702 (YKCN…RRTH), 708–730 (YRCN…LRNH), 736–758 (YKCN…QRMH), and 764–786 (FICS…QRNH).

Belongs to the krueppel C2H2-type zinc-finger protein family. As to expression, widely expressed in adult and fetal tissues.

The protein localises to the nucleus. May act as a transcriptional repressor. In Homo sapiens (Human), this protein is Zinc finger protein 606 (ZNF606).